The sequence spans 450 residues: Tubulin alpha-3E chain (450 aa).

The short motif at 1–4 (MREC) is the MREC motif element. Gln11 serves as a coordination point for GTP. An N6-acetyllysine modification is found at Lys40. Glu71, Ser140, Gly144, Thr145, Thr179, Asn206, and Asn228 together coordinate GTP. Glu71 lines the Mg(2+) pocket. Glu254 is an active-site residue. Tyr282 carries the 3'-nitrotyrosine modification. Ser439 carries the phosphoserine modification. Position 450 is a 3'-nitrotyrosine (Tyr450).

This sequence belongs to the tubulin family. Dimer of alpha and beta chains. A typical microtubule is a hollow water-filled tube with an outer diameter of 25 nm and an inner diameter of 15 nM. Alpha-beta heterodimers associate head-to-tail to form protofilaments running lengthwise along the microtubule wall with the beta-tubulin subunit facing the microtubule plus end conferring a structural polarity. Microtubules usually have 13 protofilaments but different protofilament numbers can be found in some organisms and specialized cells. Requires Mg(2+) as cofactor. Some glutamate residues at the C-terminus are polyglutamylated, resulting in polyglutamate chains on the gamma-carboxyl group. Polyglutamylation plays a key role in microtubule severing by spastin (SPAST). SPAST preferentially recognizes and acts on microtubules decorated with short polyglutamate tails: severing activity by SPAST increases as the number of glutamates per tubulin rises from one to eight, but decreases beyond this glutamylation threshold. Glutamylation is also involved in cilia motility. Post-translationally, some glutamate residues at the C-terminus are monoglycylated but not polyglycylated due to the absence of functional TTLL10 in human. Monoglycylation is mainly limited to tubulin incorporated into cilia and flagella axonemes, which is required for their stability and maintenance. Flagella glycylation controls sperm motility. Both polyglutamylation and monoglycylation can coexist on the same protein on adjacent residues, and lowering glycylation levels increases polyglutamylation, and reciprocally. In terms of processing, acetylation of alpha chains at Lys-40 is located inside the microtubule lumen. This modification has been correlated with increased microtubule stability, intracellular transport and ciliary assembly. Methylation of alpha chains at Lys-40 is found in mitotic microtubules and is required for normal mitosis and cytokinesis contributing to genomic stability. Post-translationally, nitration of Tyr-450 is irreversible and interferes with normal dynein intracellular distribution. In terms of processing, undergoes a tyrosination/detyrosination cycle, the cyclic removal and re-addition of a C-terminal tyrosine residue by the enzymes tubulin tyrosine carboxypeptidase (MATCAP1/KIAA0895L, VASH1 or VASH2) and tubulin tyrosine ligase (TTL), respectively. Tyrosination promotes microtubule interaction with CAP-Gly domain-containing proteins such as CLIP1, CLIP2 and DCTN1. Tyrosination regulates the initiation of dynein-dynactin motility via interaction with DCTN1, which brings the dynein-dynactin complex into contact with microtubules. In neurons, tyrosinated tubulins mediate the initiation of retrograde vesicle transport. Post-translationally, detyrosination is involved in metaphase plate congression by guiding chromosomes during mitosis: detyrosination promotes interaction with CENPE, promoting pole-proximal transport of chromosomes toward the equator. Detyrosination increases microtubules-dependent mechanotransduction in dystrophic cardiac and skeletal muscle. In cardiomyocytes, detyrosinated microtubules are required to resist to contractile compression during contraction: detyrosination promotes association with desmin (DES) at force-generating sarcomeres, leading to buckled microtubules and mechanical resistance to contraction.

The protein resides in the cytoplasm. The protein localises to the cytoskeleton. The catalysed reaction is GTP + H2O = GDP + phosphate + H(+). Functionally, tubulin is the major constituent of microtubules, a cylinder consisting of laterally associated linear protofilaments composed of alpha- and beta-tubulin heterodimers. Microtubules grow by the addition of GTP-tubulin dimers to the microtubule end, where a stabilizing cap forms. Below the cap, tubulin dimers are in GDP-bound state, owing to GTPase activity of alpha-tubulin. This is Tubulin alpha-3E chain (TUBA3E) from Homo sapiens (Human).